A 518-amino-acid chain; its full sequence is Ankyrin repeat and SOCS box protein 3 (518 aa).

ANK repeat units follow at residues 9–38, 42–71, 78–107, 111–140, 145–174, 178–207, 211–240, 246–275, 279–308, 315–346, and 348–373; these read DTCS…SVDV, RGWM…SENY, EGFC…DPNA, EETT…NVNG, CGWN…NKEC, FGIT…NVNC, DKAT…DPDL, SWQL…RACD, NKVS…SPDA, GFSS…QINE, and HLAY…SLGP. Residues 441 to 504 form the SOCS box domain; that stretch reads MLSARASNAW…HNYLLYEDVL (64 aa).

This sequence belongs to the ankyrin SOCS box (ASB) family. As to quaternary structure, interacts with ELOB and TNFRSF1B.

The protein localises to the cytoplasm. It functions in the pathway protein modification; protein ubiquitination. Probable substrate-recognition component of a SCF-like ECS (Elongin-Cullin-SOCS-box protein) E3 ubiquitin-protein ligase complex which mediates the ubiquitination and subsequent proteasomal degradation of target proteins. Recognizes TNFRSF1B. Plays a role in the down-regulation of antiviral innate immunity by targeting MAVS for ubiquitin-proteasomal degradation. Also destabilizes TRAF6 by enhancing its 'Lys-48'-linked polyubiquitination. This Homo sapiens (Human) protein is Ankyrin repeat and SOCS box protein 3 (ASB3).